Reading from the N-terminus, the 451-residue chain is BAHD acyltransferase At3g29680 (451 aa).

Active-site proton acceptor residues include His161 and Asp393.

This sequence belongs to the plant acyltransferase family.

The chain is BAHD acyltransferase At3g29680 from Arabidopsis thaliana (Mouse-ear cress).